We begin with the raw amino-acid sequence, 540 residues long: GMP synthase [glutamine-hydrolyzing] (540 aa).

The 194-residue stretch at 29-222 folds into the Glutamine amidotransferase type-1 domain; the sequence is KILIVDFGSQ…VRKVAGLTGD (194 aa). Catalysis depends on cysteine 106, which acts as the Nucleophile. Catalysis depends on residues histidine 196 and glutamate 198. One can recognise a GMPS ATP-PPase domain in the interval 223–415; the sequence is WTMRAFREEA…LGLPEIFVGR (193 aa). Residue 250–256 coordinates ATP; the sequence is SGGVDSA.

Homodimer.

The catalysed reaction is XMP + L-glutamine + ATP + H2O = GMP + L-glutamate + AMP + diphosphate + 2 H(+). It functions in the pathway purine metabolism; GMP biosynthesis; GMP from XMP (L-Gln route): step 1/1. In terms of biological role, catalyzes the synthesis of GMP from XMP. The chain is GMP synthase [glutamine-hydrolyzing] from Rhodopseudomonas palustris (strain HaA2).